We begin with the raw amino-acid sequence, 167 residues long: Glutathione peroxidase-like peroxiredoxin 1 (167 aa).

The Cysteine sulfenic acid (-SOH) intermediate role is filled by Cys-36. The cysteines at positions 36 and 82 are disulfide-linked.

This sequence belongs to the glutathione peroxidase family. In terms of assembly, monomer.

It localises to the peroxisome matrix. It is found in the mitochondrion outer membrane. The enzyme catalyses 2 glutathione + H2O2 = glutathione disulfide + 2 H2O. The catalysed reaction is a hydroperoxide + [thioredoxin]-dithiol = an alcohol + [thioredoxin]-disulfide + H2O. Its function is as follows. Glutathione peroxidase-like protein that protects cells from phospholipid hydroperoxides and nonphospholipid peroxides during oxidative stress. Has peroxidase activity using thioredoxin or glutathione as a reducing power. Involved in peroxisome formation. The chain is Glutathione peroxidase-like peroxiredoxin 1 from Saccharomyces cerevisiae (strain ATCC 204508 / S288c) (Baker's yeast).